Here is a 500-residue protein sequence, read N- to C-terminus: MSDSPKNAPRITDEADVVLIGAGIMSSTLGAMLRQLEPSWTQIVFERLDGPAQESSSPWNNAGTGHSALCELNYTPEVKGKVEIAKAVGINEKFQVSRQFWSHLVEEGVLSDPKEFINPVPHVSFGQGADQVAYIKARYEALKDHPLFQGMTYADDEATFTEKLPLMAKGRDFSDPVAISWIDEGTDINYGAQTKQYLDAAEVEGTEIRYGHEVKSIKADGAKWIVTVKNVHTGDTKTIKANFVFVGAGGYALDLLRSAGIPQVKGFAGFPVSGLWLRCTNEELIEQHAAKVYGKASVGAPPMSVPHLDTRVIEGEKGLLFGPYGGWTPKFLKEGSYLDLFKSIRPDNIPSYLGVAAQEFDLTKYLVTEVLKDQDKRMDALREYMPEAQNGDWETIVAGQRVQVIKPAGFPKFGSLEFGTTLINNSEGTIAGLLGASPGASIAPSAMIELLERCFGDRMIEWGDKLKDMIPSYGKKLASEPALFEQQWARTQKTLKLEEA.

Belongs to the MQO family. FAD is required as a cofactor.

It carries out the reaction (S)-malate + a quinone = a quinol + oxaloacetate. It functions in the pathway carbohydrate metabolism; tricarboxylic acid cycle; oxaloacetate from (S)-malate (quinone route): step 1/1. The polypeptide is Probable malate:quinone oxidoreductase (Corynebacterium glutamicum (strain R)).